The sequence spans 492 residues: uncharacterized protein (492 aa).

Residues 30-46 (YVCLSVAVAAVGYANYM) traverse the membrane as a helical segment. Positions 144–210 (NYYDVLNVNE…IRKNIYDNEG (67 aa)) constitute a J domain.

The protein resides in the membrane. This is an uncharacterized protein from Plasmodium falciparum (isolate 3D7).